The following is a 745-amino-acid chain: Junction plakoglobin (745 aa).

Methionine 1 carries the post-translational modification N-acetylmethionine. O-linked (GlcNAc) threonine glycosylation is present at threonine 14. Serine 99 and serine 125 each carry phosphoserine. 12 ARM repeats span residues 132-171 (NYQD…QLSK), 172-215 (KEAS…LSHH), 216-255 (REGL…NLLL), 258-297 (EGAK…LLAY), 298-341 (GNQE…LSVC), 342-381 (PSNK…NLSD), 383-420 (ATKQ…NLTC), 423-464 (SKNK…HLTS), 470-510 (EMAQ…NLAL), 512-551 (PANH…QPYT), 574-613 (PMNR…ELAQ), and 615-661 (KEAA…PDYR). The interval 132–297 (NYQDDAELAT…TTDCLQLLAY (166 aa)) is interaction with DSC1 and DSG1. Position 182 is a phosphoserine (serine 182). The interval 574–661 (PMNRMEIFRL…ISEDKNPDYR (88 aa)) is interaction with DSC1. Serine 665 and serine 730 each carry phosphoserine.

This sequence belongs to the beta-catenin family. In terms of assembly, homodimer. Component of an E-cadherin/catenin adhesion complex composed of at least E-cadherin/CDH1 and gamma-catenin/JUP, and possibly alpha-catenin/CTNNA1; the complex is located to adherens junctions. The stable association of CTNNA1 is controversial as CTNNA1 was shown not to bind to F-actin when assembled in the complex. Interacts with MUC1. Interacts with CAV1. Interacts with PTPRJ. Interacts with DSG1. Interacts with DSC1 and DSC2. Interacts with PKP2. Interacts with PKP3 (via N-terminus); the interaction is required for PKP3 localization to desmosome cell-cell junctions. Interacts with DSG4. In terms of processing, may be phosphorylated by FER. As to expression, expressed in the mammary epithelium (at protein level).

Its subcellular location is the cell junction. It localises to the adherens junction. The protein localises to the desmosome. It is found in the cytoplasm. The protein resides in the cytoskeleton. Its subcellular location is the cell membrane. It localises to the nucleus. In terms of biological role, common junctional plaque protein. The membrane-associated plaques are architectural elements in an important strategic position to influence the arrangement and function of both the cytoskeleton and the cells within the tissue. The presence of plakoglobin in both the desmosomes and in the intermediate junctions suggests that it plays a central role in the structure and function of submembranous plaques. Acts as a substrate for VE-PTP and is required by it to stimulate VE-cadherin function in endothelial cells. Can replace beta-catenin in E-cadherin/catenin adhesion complexes which are proposed to couple cadherins to the actin cytoskeleton. The chain is Junction plakoglobin from Mus musculus (Mouse).